We begin with the raw amino-acid sequence, 286 residues long: Large ribosomal subunit protein uL2 (286 aa).

Disordered stretches follow at residues 22–59 (KELT…GGGH) and 215–286 (LGRR…KLHK). Positions 230 to 240 (DHPHGGGEGRT) are enriched in basic and acidic residues. Basic residues predominate over residues 255 to 286 (KGGRTRQKRKPSNSSIVRRRKSRRYGQLKLHK).

It belongs to the universal ribosomal protein uL2 family. In terms of assembly, part of the 50S ribosomal subunit. Forms a bridge to the 30S subunit in the 70S ribosome.

Functionally, one of the primary rRNA binding proteins. Required for association of the 30S and 50S subunits to form the 70S ribosome, for tRNA binding and peptide bond formation. It has been suggested to have peptidyltransferase activity; this is somewhat controversial. Makes several contacts with the 16S rRNA in the 70S ribosome. This chain is Large ribosomal subunit protein uL2, found in Rhodopirellula baltica (strain DSM 10527 / NCIMB 13988 / SH1).